The primary structure comprises 550 residues: MFCVQCEQTIRTPAGNGCSYAQGMCGKTAETSDLQDLLIAALQGLSAWAVKAREYGIINHDVDNFAPRAFFSTLTNVNFDSPRIVGYAREAIALREALKAQCLSVDANAHCDNPMADLQLVSDDLGELQRQAAEFTPNKDKAAIGENILGLRLLCLYGLKGAAAYMEHAHVLGQYDNDIYAQYHKIMAWLGTWPADMNALLECAMEIGQMNFKVMSILDAGETTKYGHPTPTQVNVKATEGKCILISGHDLKDLYNLLEQTEGTGVNVYTHGEMLPAHGYPELRKFKHLVGNYGSGWQNQQVEFARFPGPIVMTSNCIIDPTVGSYDDRIWTRSIVGWPGVSHLEGDDFGPVIAQAQQMAGFPYSEIPHLITVGFGRQTLLGAADTLIDLVSREKLRHIFLVGGCDGARGERNYFTDFATSVPDDCLILTLACGKYRFNKLEFGDIEGLPRLVDAGQCNDAYSAIILAVTLAEKLGCGVNDLPLSLVLSWFEQKAIVILLTLLSLGVKNIVTGPTAPGFFTPDLLAILNEKFGLRSVTTVEEDMKQLLSA.

Positions 3, 6, 18, and 25 each coordinate [2Fe-2S] cluster. The hybrid [4Fe-2O-2S] cluster site is built by H249, E273, C317, C405, C433, C458, E492, and K494. Position 405 is a cysteine persulfide (C405).

This sequence belongs to the HCP family. Requires [2Fe-2S] cluster as cofactor. It depends on hybrid [4Fe-2O-2S] cluster as a cofactor.

Its subcellular location is the cytoplasm. It carries out the reaction A + NH4(+) + H2O = hydroxylamine + AH2 + H(+). Catalyzes the reduction of hydroxylamine to form NH(3) and H(2)O. The protein is Hydroxylamine reductase of Salmonella agona (strain SL483).